Reading from the N-terminus, the 394-residue chain is MIISAASDYRAAAQRILPPFLFHYIDGGAYAEHTLRRNVEDLSDVALRQRILRNMSDLSLETTLFNEKLAMPTALAPVGLCGMYARRGEVQAAGAADDKGIPFTLSTVSVCPIEEVAPTIKRPMWFQLYVLRDRGFMRNALERAKAAGCSTLVFTVDMPTPGARYRDAHSGMSGPNAALRRYWQAVTHPQWAWDVGLNGRPHDLGNISAYLGQPTGLEDYIGWLANNFDPSISWKDLEWIRDFWDGPMVIKGILDPEDARDAVRFGADGIVVSNHGGRQLDGVLSSARALPAIADAVKGDITILADSGIRNGLDVVRMIALGADSVLLGRAYLYALATHGKQGVANLLNLIEKEMKVAMTLTGAKTIREISRDSLVQNAEALQTFDALKQNNAA.

The FMN hydroxy acid dehydrogenase domain maps to Met-1 to Glu-380. Residue Tyr-24 coordinates substrate. FMN is bound by residues Ser-106 and Gln-127. Residue Tyr-129 coordinates substrate. Residue Thr-155 participates in FMN binding. Residue Arg-164 coordinates substrate. Lys-251 provides a ligand contact to FMN. His-275 serves as the catalytic Proton acceptor. Residue Arg-278 coordinates substrate. Asp-306–Arg-330 serves as a coordination point for FMN.

Belongs to the FMN-dependent alpha-hydroxy acid dehydrogenase family. FMN is required as a cofactor.

It localises to the cell inner membrane. It carries out the reaction (S)-lactate + A = pyruvate + AH2. Catalyzes the conversion of L-lactate to pyruvate. Is coupled to the respiratory chain. In Klebsiella pneumoniae (strain 342), this protein is L-lactate dehydrogenase.